A 183-amino-acid chain; its full sequence is Orotate phosphoribosyltransferase (183 aa).

5-phospho-alpha-D-ribose 1-diphosphate is bound by residues Arg-90, Lys-91, Lys-94, and 115–123; that span reads DDVATTGGS. Positions 119 and 147 each coordinate orotate.

It belongs to the purine/pyrimidine phosphoribosyltransferase family. PyrE subfamily. In terms of assembly, homodimer. Mg(2+) serves as cofactor.

The enzyme catalyses orotidine 5'-phosphate + diphosphate = orotate + 5-phospho-alpha-D-ribose 1-diphosphate. Its pathway is pyrimidine metabolism; UMP biosynthesis via de novo pathway; UMP from orotate: step 1/2. Catalyzes the transfer of a ribosyl phosphate group from 5-phosphoribose 1-diphosphate to orotate, leading to the formation of orotidine monophosphate (OMP). The chain is Orotate phosphoribosyltransferase from Methanopyrus kandleri (strain AV19 / DSM 6324 / JCM 9639 / NBRC 100938).